We begin with the raw amino-acid sequence, 931 residues long: GPI ethanolamine phosphate transferase 1 (931 aa).

Position 1 (methionine 1) is a topological domain, cytoplasmic. A helical membrane pass occupies residues 2-22 (LLFFALGLLIHFVFFASIFDI). Over 23-442 (YFTSPLVHGM…SYYHTYDRLF (420 aa)) the chain is Lumenal. N-linked (GlcNAc...) asparagine glycosylation is found at asparagine 128, asparagine 192, asparagine 295, and asparagine 350. A helical membrane pass occupies residues 443-463 (LGINVAVGFVGWMSYTSLLII). Residues 464–480 (KSHSNIPKGTRKEGKKP) lie on the Cytoplasmic side of the membrane. A helical membrane pass occupies residues 481-501 (HCLLLYSFIATGVLVACFLMI). Position 502 (glutamine 502) is a topological domain, lumenal. The chain crosses the membrane as a helical span at residues 503–523 (ACPWTYYVYCLLPVPIWYAVL). Residues 524 to 543 (REHEVIQDLVESLLTFPRSH) are Cytoplasmic-facing. Residues 544 to 564 (FVAYLLVFTLGIEVLVLSFFY) traverse the membrane as a helical segment. Arginine 565 is a topological domain (lumenal). A helical transmembrane segment spans residues 566–586 (YMLTAGLIVFAGWPFLTQLWT). Over 587-591 (RAKIT) the chain is Cytoplasmic. A helical transmembrane segment spans residues 592–612 (FLSWAFFSLLLAVFPLMPVVG). At 613–618 (RKPNLS) the chain is on the lumenal side. The N-linked (GlcNAc...) asparagine glycan is linked to asparagine 616. Residues 619–639 (LVMGAGFLVLLLSLAVVTTLG) form a helical membrane-spanning segment. The Cytoplasmic portion of the chain corresponds to 640–649 (KRNIKLVKGE). A helical transmembrane segment spans residues 650 to 670 (LLVLLLQMLSTVLSMYVVYST). At 671–685 (HHSLLKKEGLPLMNQ) the chain is on the lumenal side. A helical membrane pass occupies residues 686–706 (IVSWATLASSLVAPLLSSTAL). The Cytoplasmic segment spans residues 707-723 (SQRLASILLSLMSTYLL). The chain crosses the membrane as a helical span at residues 724 to 744 (LSTGYEALFPLVLSCLMFVWI). Topologically, residues 745–786 (QVEQETLQQPGVSCKQKLTSIQFTCDTDIAQFRQLCPDDIRR) are lumenal. Residues 787–807 (AFFLVFFLLTAFFGTGNIASI) form a helical membrane-spanning segment. At 808 to 824 (NSFDLASVYCFLTVFSP) the chain is on the cytoplasmic side. The helical transmembrane segment at 825 to 845 (FMMGALMMWKILIPFVLVMCA) threads the bilayer. Residues 846 to 858 (FEAVQITTQLSSK) are Lumenal-facing. Residues 859–879 (GLFLVVLIISDIMALHFFFLV) form a helical membrane-spanning segment. Over 880–894 (KDSGSWLDIGTSISH) the chain is Cytoplasmic. A helical transmembrane segment spans residues 895–915 (YVIVMSMTIFLVFLNGLAQLL). The Lumenal segment spans residues 916–931 (TTKKLQLCGKPKSHLM).

It belongs to the PIGG/PIGN/PIGO family. PIGN subfamily.

The protein localises to the endoplasmic reticulum membrane. Its pathway is glycolipid biosynthesis; glycosylphosphatidylinositol-anchor biosynthesis. Functionally, ethanolamine phosphate transferase that catalyzes an ethanolamine phosphate (EtNP) transfer from phosphatidylethanolamine (PE) to the 2-OH position of the first alpha-1,4-linked mannose of the alpha-D-Man-(1-&gt;6)-alpha-D-Man-(1-&gt;4)-alpha-D-GlcN-(1-&gt;6)-(1-radyl,2-acyl-sn-glycero-3-phospho)-2-acyl-inositol (also termed H3) intermediate to generate an alpha-D-Man-(1-&gt;6)-2-PEtn-alpha-D-Man-(1-&gt;4)-alpha-D-GlcN-(1-&gt;6)-(1-radyl,2-acyl-sn-glycero-3-phospho)-2-acyl-inositol and participates in the eighth step of the glycosylphosphatidylinositol-anchor biosynthesis. May act as suppressor of replication stress and chromosome missegregation. This is GPI ethanolamine phosphate transferase 1 from Mus musculus (Mouse).